The following is a 368-amino-acid chain: Probable protein phosphatase 2C 58 (368 aa).

The PPM-type phosphatase domain occupies 23–329 (KFGLSSMQGW…DNMTMILVQF (307 aa)). 4 residues coordinate Mn(2+): aspartate 57, glycine 58, aspartate 272, and aspartate 320. A disordered region spans residues 336–368 (NKNVSPAEQSAADKQPTGDTHWSEIHVTEESSS). Basic and acidic residues predominate over residues 356-368 (HWSEIHVTEESSS).

The protein belongs to the PP2C family. Requires Mg(2+) as cofactor. The cofactor is Mn(2+).

The catalysed reaction is O-phospho-L-seryl-[protein] + H2O = L-seryl-[protein] + phosphate. It catalyses the reaction O-phospho-L-threonyl-[protein] + H2O = L-threonyl-[protein] + phosphate. This is Probable protein phosphatase 2C 58 from Oryza sativa subsp. japonica (Rice).